Consider the following 384-residue polypeptide: MAKHLFTSESVSEGHPDKIADQISDAVLDAILEQDPKARVACETYVKTGMVLVGGEVTTNAWVDIEEITRRTIREIGYVHSDMGFDANSCAVLSAIGKQSPDINQGVDRENPLEQGAGDQGLMFGYATNETSVLMPAPITYAHRLVERQAEVRKNGALPWLRPDAKSQVTFQYDDGKIVGIDAVVLSTQHSEDINQKDLHEAVMEEIIKPVLPAEWITAHTKYFINPTGRFVIGGPMGDCGLTGRKIIVDTYGGMARHGGGAFSGKDPSKVDRSAAYAARYVAKNIVAAGLADRCEIQVSYAIGVAEPTSIMVEAFGTEKIPADQLTLLVREFFDLRPYGLIKMLDLLHPIYRETAAYGHFGREHFPWEKTDKAALLRDAAGLK.

His-15 is a binding site for ATP. A Mg(2+)-binding site is contributed by Asp-17. A K(+)-binding site is contributed by Glu-43. L-methionine contacts are provided by Glu-56 and Gln-99. Residues 99–109 (QSPDINQGVDR) are flexible loop. Residues 164–166 (DAK), 230–231 (RF), Asp-239, 245–246 (RK), Ala-262, and Lys-266 each bind ATP. L-methionine is bound at residue Asp-239. Lys-270 is a binding site for L-methionine.

It belongs to the AdoMet synthase family. Homotetramer; dimer of dimers. Requires Mg(2+) as cofactor. K(+) serves as cofactor.

It is found in the cytoplasm. The catalysed reaction is L-methionine + ATP + H2O = S-adenosyl-L-methionine + phosphate + diphosphate. It participates in amino-acid biosynthesis; S-adenosyl-L-methionine biosynthesis; S-adenosyl-L-methionine from L-methionine: step 1/1. Its function is as follows. Catalyzes the formation of S-adenosylmethionine (AdoMet) from methionine and ATP. The overall synthetic reaction is composed of two sequential steps, AdoMet formation and the subsequent tripolyphosphate hydrolysis which occurs prior to release of AdoMet from the enzyme. This chain is S-adenosylmethionine synthase, found in Yersinia pseudotuberculosis serotype IB (strain PB1/+).